A 261-amino-acid chain; its full sequence is uncharacterized protein (261 aa).

6 helical membrane-spanning segments follow: residues 31–51 (TFLS…TGIV), 71–91 (TNVM…SWLL), 101–121 (LAYI…AGIA), 130–150 (LTSS…ASFI), 167–187 (LLLF…IPYV), and 213–233 (FAWL…YLAI).

The protein resides in the cell membrane. This is an uncharacterized protein from Mycoplasma genitalium (strain ATCC 33530 / DSM 19775 / NCTC 10195 / G37) (Mycoplasmoides genitalium).